A 201-amino-acid chain; its full sequence is UPF0301 protein Avi_1069 (201 aa).

This sequence belongs to the UPF0301 (AlgH) family.

The polypeptide is UPF0301 protein Avi_1069 (Allorhizobium ampelinum (strain ATCC BAA-846 / DSM 112012 / S4) (Agrobacterium vitis (strain S4))).